The chain runs to 173 residues: Microfibrillar-associated protein 5 (173 aa).

A signal peptide spans Met1 to Trp21. The Cell attachment site signature appears at Arg30–Asp32. An O-linked (GalNAc...) threonine glycan is attached at Thr54. The N-linked (GlcNAc...) asparagine glycan is linked to Asn79.

The protein belongs to the MFAP family. As to quaternary structure, interacts with TGFB2. Interacts with BMP2. Interacts with FBN1 (via N-terminal domain) and FBN2. Forms intermolecular disulfide bonds either with other MAGP-2 molecules or with other components of the microfibrils. In terms of processing, N- and O-glycosylated. O-glycosylated with core 1 or possibly core 8 glycans. O-glycan heterogeneity at Thr-54: HexHexNAc (major) and HexHexNAc + sulfate (minor).

The protein resides in the secreted. Its subcellular location is the extracellular space. It is found in the extracellular matrix. Functionally, may play a role in hematopoiesis. In the cardiovascular system, could regulate growth factors or participate in cell signaling in maintaining large vessel integrity. Component of the elastin-associated microfibrils. The polypeptide is Microfibrillar-associated protein 5 (MFAP5) (Homo sapiens (Human)).